The chain runs to 537 residues: Chaperonin GroEL 1 (537 aa).

Residues 29–32 (TLGP), 86–90 (DGTTT), glycine 413, 478–480 (NAA), and aspartate 494 contribute to the ATP site.

This sequence belongs to the chaperonin (HSP60) family. In terms of assembly, forms a cylinder of 14 subunits composed of two heptameric rings stacked back-to-back. Interacts with the co-chaperonin GroES.

It localises to the cytoplasm. The enzyme catalyses ATP + H2O + a folded polypeptide = ADP + phosphate + an unfolded polypeptide.. In terms of biological role, together with its co-chaperonin GroES, plays an essential role in assisting protein folding. The GroEL-GroES system forms a nano-cage that allows encapsulation of the non-native substrate proteins and provides a physical environment optimized to promote and accelerate protein folding. The chain is Chaperonin GroEL 1 from Corynebacterium efficiens (strain DSM 44549 / YS-314 / AJ 12310 / JCM 11189 / NBRC 100395).